The primary structure comprises 431 residues: Serine--tRNA ligase (431 aa).

Residues 41–66 (QSRTQELQAERNARSKSIGEAARRGE) are disordered. 240-242 (TSE) lines the L-serine pocket. 271–273 (RSE) provides a ligand contact to ATP. L-serine is bound at residue E294. 358-361 (EISS) is a binding site for ATP. S392 contacts L-serine.

The protein belongs to the class-II aminoacyl-tRNA synthetase family. Type-1 seryl-tRNA synthetase subfamily. As to quaternary structure, homodimer. The tRNA molecule binds across the dimer.

It is found in the cytoplasm. The enzyme catalyses tRNA(Ser) + L-serine + ATP = L-seryl-tRNA(Ser) + AMP + diphosphate + H(+). It catalyses the reaction tRNA(Sec) + L-serine + ATP = L-seryl-tRNA(Sec) + AMP + diphosphate + H(+). The protein operates within aminoacyl-tRNA biosynthesis; selenocysteinyl-tRNA(Sec) biosynthesis; L-seryl-tRNA(Sec) from L-serine and tRNA(Sec): step 1/1. Catalyzes the attachment of serine to tRNA(Ser). Is also able to aminoacylate tRNA(Sec) with serine, to form the misacylated tRNA L-seryl-tRNA(Sec), which will be further converted into selenocysteinyl-tRNA(Sec). The chain is Serine--tRNA ligase from Aeromonas salmonicida (strain A449).